The following is a 76-amino-acid chain: Small ribosomal subunit protein bS18 (76 aa).

Belongs to the bacterial ribosomal protein bS18 family. As to quaternary structure, part of the 30S ribosomal subunit. Forms a tight heterodimer with protein bS6.

In terms of biological role, binds as a heterodimer with protein bS6 to the central domain of the 16S rRNA, where it helps stabilize the platform of the 30S subunit. In Oceanobacillus iheyensis (strain DSM 14371 / CIP 107618 / JCM 11309 / KCTC 3954 / HTE831), this protein is Small ribosomal subunit protein bS18.